Reading from the N-terminus, the 91-residue chain is MSITTERKQQLIKEYAITENDTGSTAVQCAILTERINNLTEHFKSNHKDHTSRRGLLILVGRRRRLLNYIKKNNVSEYLDLISKLGIRKIK.

It belongs to the universal ribosomal protein uS15 family. Part of the 30S ribosomal subunit. Forms a bridge to the 50S subunit in the 70S ribosome, contacting the 23S rRNA.

One of the primary rRNA binding proteins, it binds directly to 16S rRNA where it helps nucleate assembly of the platform of the 30S subunit by binding and bridging several RNA helices of the 16S rRNA. In terms of biological role, forms an intersubunit bridge (bridge B4) with the 23S rRNA of the 50S subunit in the ribosome. In Rickettsia prowazekii (strain Madrid E), this protein is Small ribosomal subunit protein uS15.